The chain runs to 140 residues: Nucleoside diphosphate kinase (140 aa).

ATP contacts are provided by lysine 11, phenylalanine 59, arginine 87, threonine 93, arginine 104, and asparagine 114. Histidine 117 acts as the Pros-phosphohistidine intermediate in catalysis.

It belongs to the NDK family. As to quaternary structure, homotetramer. Mg(2+) is required as a cofactor.

The protein localises to the cytoplasm. The catalysed reaction is a 2'-deoxyribonucleoside 5'-diphosphate + ATP = a 2'-deoxyribonucleoside 5'-triphosphate + ADP. The enzyme catalyses a ribonucleoside 5'-diphosphate + ATP = a ribonucleoside 5'-triphosphate + ADP. Functionally, major role in the synthesis of nucleoside triphosphates other than ATP. The ATP gamma phosphate is transferred to the NDP beta phosphate via a ping-pong mechanism, using a phosphorylated active-site intermediate. The sequence is that of Nucleoside diphosphate kinase from Gluconobacter oxydans (strain 621H) (Gluconobacter suboxydans).